The following is a 730-amino-acid chain: Elongation factor 2 (730 aa).

Residues 19–260 enclose the tr-type G domain; that stretch reads QRIRNIGIVA…MVIHFLPNPL (242 aa). GTP-binding positions include 28–35, 94–98, and 148–151; these read AHIDHGKT, DTPGH, and NKVD. At histidine 596 the chain carries Diphthamide.

Belongs to the TRAFAC class translation factor GTPase superfamily. Classic translation factor GTPase family. EF-G/EF-2 subfamily.

The protein resides in the cytoplasm. Catalyzes the GTP-dependent ribosomal translocation step during translation elongation. During this step, the ribosome changes from the pre-translocational (PRE) to the post-translocational (POST) state as the newly formed A-site-bound peptidyl-tRNA and P-site-bound deacylated tRNA move to the P and E sites, respectively. Catalyzes the coordinated movement of the two tRNA molecules, the mRNA and conformational changes in the ribosome. This is Elongation factor 2 from Methanosarcina mazei (strain ATCC BAA-159 / DSM 3647 / Goe1 / Go1 / JCM 11833 / OCM 88) (Methanosarcina frisia).